Here is a 1113-residue protein sequence, read N- to C-terminus: MNDWQWLKNRLVNAKTKAVSFWLAQTTSTILDIAELIKCCSDLKNTSINGLVDLINQQEKLEFNLTRLKEIDGEDARQLFGIEGNVYKHFQTELSRFYKQTRKHFRETGSESLFLGLPVIEGINEFNDVFRAPLLYVGVKLKVAPRLERFWLEINREEIFLNPTIIGVEINKRNSLFKNNYDTTKVDINQALEIFRELEYQFRMPLTSELKSFSKKAKSDFNTEKRTNFLTNNVLLGIFDVKGDQLFQNFNEILNTDPDVLDELLKDRRDLLYDNREFRENFNLKGTYLFSHLDIFQQYAVKQAFDGDVIIEGPPGTGKSETIVNILVNLALNKKKVLFVSEKVTALDVVYNRLGSFKHIALFNASVASEKKRFYSQFADYESFFTDNFSKKDLVNEMPVFDGQWVDKILSEFTNLQNIYDTQINSGNQSYSFKEILSSFPILDVSYIKIKEHDRFDEWVRVFSSQVWLEKHLTYLAFKAELSKRWQNIDNFYALKDLLEKRKNIRVLCYVLDYFEQNNSIIKPKRVLLYTPTERGQKQLHQLQQDVAKYNSLQRFKSAAKFETIKLNLANKLAQNAKPFFFSWFIQTHAQTLLENLVQTQKQLVKAKQSYLSKIEQYVVSCKRILKATILANFFELYQTNKNELLDICREAKNPVLKEITWWFKKNFALLSKLFPVHIMTFESAALLTPNQRRLYDYVVIDEASQVYLERAIPILYRGAKYIIAGDTKQLKPSNFFQARAEYDVDEEFEDGNVEAAVHSTSLLHFLKNRSRILTLLKFHYRSDSANLIAFTNNRIYNNELIFMNKATADKQVFIVHDVIDGIWRNNRNLQEARDVVQRLEQLTQTAEYQKSLGVICFNKNQAELIEYMIDKQNNPLLNEWRDRVNAQGEYVGLFVKNIENVQGDERDIIIFSLGYDRSVNSYGPISKQGGENRLNVAITRAKQRIELFKTNRASDYNGLSSNSLGSKLLVEYLLYCEAMANNQGESLDFQATQKQAPKAKYELELENQFFNELELIFGEQFTIKRNVNEGAYSFSFVFYFNENPYLAVDFNPALPHSRKEVSENIIYREQFLKKRKWNLVNIWLDEWKLNPGGVLQKLRNCLTHSENEFEEI.

An ATP-binding site is contributed by 313–320 (GPPGTGKS).

Belongs to the DNA2/NAM7 helicase family.

This is an uncharacterized protein from Mycoplasma pneumoniae (strain ATCC 29342 / M129 / Subtype 1) (Mycoplasmoides pneumoniae).